The primary structure comprises 1317 residues: DNA-directed RNA polymerase subunit beta' (1317 aa).

Zn(2+)-binding residues include C60, C62, C75, and C78. D535, D537, and D539 together coordinate Mg(2+). Zn(2+)-binding residues include C890, C967, C974, and C977.

Belongs to the RNA polymerase beta' chain family. In terms of assembly, the RNAP catalytic core consists of 2 alpha, 1 beta, 1 beta' and 1 omega subunit. When a sigma factor is associated with the core the holoenzyme is formed, which can initiate transcription. It depends on Mg(2+) as a cofactor. Zn(2+) serves as cofactor.

It catalyses the reaction RNA(n) + a ribonucleoside 5'-triphosphate = RNA(n+1) + diphosphate. Its function is as follows. DNA-dependent RNA polymerase catalyzes the transcription of DNA into RNA using the four ribonucleoside triphosphates as substrates. This is DNA-directed RNA polymerase subunit beta' from Mycolicibacterium smegmatis (strain ATCC 700084 / mc(2)155) (Mycobacterium smegmatis).